Reading from the N-terminus, the 813-residue chain is G-type lectin S-receptor-like serine/threonine-protein kinase LECRK1 (813 aa).

An N-terminal signal peptide occupies residues Met-1–Ala-19. Residues Gln-20 to Ser-466 lie on the Extracellular side of the membrane. The region spanning Gln-22 to Asp-149 is the Bulb-type lectin domain. N-linked (GlcNAc...) asparagine glycans are attached at residues Asn-24, Asn-57, Asn-164, Asn-168, Asn-219, and Asn-242. One can recognise an EGF-like; atypical domain in the interval Pro-293–Lys-346. 5 cysteine pairs are disulfide-bonded: Cys-297/Cys-315, Cys-309/Cys-327, Cys-329/Cys-345, Cys-391/Cys-413, and Cys-395/Cys-401. A PAN domain is found at Cys-354–Val-433. N-linked (GlcNAc...) asparagine glycans are attached at residues Asn-407 and Asn-441. Residues Leu-467 to Thr-487 traverse the membrane as a helical segment. Residues Tyr-488–Pro-813 are Cytoplasmic-facing. Residues Ala-523–Val-797 enclose the Protein kinase domain. ATP is bound by residues Leu-529–Val-537 and Lys-553. Asp-647 functions as the Proton acceptor in the catalytic mechanism.

This sequence belongs to the protein kinase superfamily. Ser/Thr protein kinase family. Interacts (via kinase domain) with ADF4. In terms of tissue distribution, expressed in plumules, radicles and panicles.

The protein resides in the membrane. It carries out the reaction L-seryl-[protein] + ATP = O-phospho-L-seryl-[protein] + ADP + H(+). The catalysed reaction is L-threonyl-[protein] + ATP = O-phospho-L-threonyl-[protein] + ADP + H(+). In terms of biological role, involved in innate immunity. Required for the expression of defense-related genes PR1A, LOX2 and CHS1 upon biotic stresses. Required for basal resistance to the fungal blast (M.grisea), bacterial blight (O.oryzae pv. oryzae, Xoo) and the herbivorous insect brown planthopper (N.lugens, BPH). May be involved in several defense signaling pathways. Involved in the promotion of seed germination. Required for the expression of alpha-amylase genes during seed germination. Involved in resistance against the brown planthopper (BPH). Member of the BPH3 (BPH resistance locus 3) cluster which contains LECRK1, LECRK2 and LECRK3. The chain is G-type lectin S-receptor-like serine/threonine-protein kinase LECRK1 from Oryza sativa subsp. indica (Rice).